The sequence spans 157 residues: Probable cyclic pyranopterin monophosphate synthase (157 aa).

Substrate is bound by residues 75–77 and 111–112; these read MCH and ME. Asp126 is an active-site residue.

It belongs to the MoaC family. In terms of assembly, homohexamer; trimer of dimers.

It catalyses the reaction (8S)-3',8-cyclo-7,8-dihydroguanosine 5'-triphosphate = cyclic pyranopterin phosphate + diphosphate. It functions in the pathway cofactor biosynthesis; molybdopterin biosynthesis. In terms of biological role, catalyzes the conversion of (8S)-3',8-cyclo-7,8-dihydroguanosine 5'-triphosphate to cyclic pyranopterin monophosphate (cPMP). The polypeptide is Probable cyclic pyranopterin monophosphate synthase (Methanosarcina mazei (strain ATCC BAA-159 / DSM 3647 / Goe1 / Go1 / JCM 11833 / OCM 88) (Methanosarcina frisia)).